The primary structure comprises 158 residues: MQKIPLTVRGAELLKQELQQLKSVARPEVIEAIAEARSHGDLSENAEYEAAKERQGFIEGRISELEHKLSVAHIINPTEIHAEGKIVFGTTVTLEDLETEEHVIYQIVGEDEADIKQGKIYVGSPIARALIGKEEGDTAEVQAPGGVREYDIIEVRYI.

Positions 46 to 66 (AEYEAAKERQGFIEGRISELE) form a coiled coil.

This sequence belongs to the GreA/GreB family.

Necessary for efficient RNA polymerase transcription elongation past template-encoded arresting sites. The arresting sites in DNA have the property of trapping a certain fraction of elongating RNA polymerases that pass through, resulting in locked ternary complexes. Cleavage of the nascent transcript by cleavage factors such as GreA or GreB allows the resumption of elongation from the new 3'terminus. GreA releases sequences of 2 to 3 nucleotides. The chain is Transcription elongation factor GreA from Neisseria meningitidis serogroup B (strain ATCC BAA-335 / MC58).